An 807-amino-acid polypeptide reads, in one-letter code: Spondin-1 (807 aa).

An N-terminal signal peptide occupies residues 1–28 (MRLSPVSLRLSRGPALLALALPLAAALA). A Reelin domain is found at 29-194 (FSDETLDKVT…DPTLDGVTDR (166 aa)). Disulfide bonds link Cys44/Cys128, Cys156/Cys182, Cys199/Cys336, Cys200/Cys340, Cys202/Cys415, Cys443/Cys480, Cys454/Cys489, Cys459/Cys494, Cys502/Cys538, Cys513/Cys517, Cys548/Cys554, Cys559/Cys595, Cys570/Cys574, Cys605/Cys610, Cys615/Cys650, Cys626/Cys630, and Cys660/Cys665. The Spondin domain maps to 195–388 (PILDCCACGT…LTSLDHPQSP (194 aa)). N-linked (GlcNAc...) asparagine glycosylation is present at Asn214. Ca(2+) is bound by residues Asp325, Asp354, and Asp358. 5 TSP type-1 domains span residues 442–495 (TCIY…PGCS), 501–555 (TCTM…EECS), 558–611 (SCLV…PECH), 614–666 (PCLL…PECP), and 668–721 (DCEL…RKCL). A glycan (N-linked (GlcNAc...) asparagine) is linked at Asn681. A compositionally biased stretch (basic and acidic residues) spans 732–746 (REARESRRSEQLREE). Residues 732 to 752 (REARESRRSEQLREESDGEQF) form a disordered region. In terms of domain architecture, TSP type-1 6 spans 754 to 806 (GCRMRPWTAWSECTKLCGGGIQERYMTVKKRFKSSQFTSCKDKKEIRACNVHP).

Binds to the central extracellular domain of APP and inhibits beta-secretase cleavage of APP.

It localises to the secreted. The protein localises to the extracellular space. The protein resides in the extracellular matrix. Cell adhesion protein that promotes the attachment of spinal cord and sensory neuron cells and the outgrowth of neurites in vitro. May contribute to the growth and guidance of axons in both the spinal cord and the PNS. The sequence is that of Spondin-1 (Spon1) from Mus musculus (Mouse).